Here is a 207-residue protein sequence, read N- to C-terminus: Thaumatin-like protein 1 (207 aa).

Disulfide bonds link cysteine 9-cysteine 202, cysteine 50-cysteine 60, cysteine 65-cysteine 71, cysteine 117-cysteine 191, cysteine 122-cysteine 174, cysteine 130-cysteine 140, cysteine 144-cysteine 153, and cysteine 154-cysteine 161.

This sequence belongs to the thaumatin family. In terms of assembly, monomer. Not glycosylated.

The protein localises to the secreted. Acidic thaumatin-like protein. Exhibits weak beta-1,3-glucanase activity with laminarin as substrate. This chain is Thaumatin-like protein 1 (TLP1), found in Manilkara zapota (Sapodilla plum).